Here is a 792-residue protein sequence, read N- to C-terminus: uncharacterized protein (792 aa).

361 to 362 (WD) contributes to the substrate binding site. Glutamate 488 acts as the Proton donor in catalysis. A substrate-binding site is contributed by 590 to 591 (KQ). Positions 753-792 (DSPSTIAVRDRKPLLPPPSQPPGREPVSRRHKSLIISAAR) are disordered. The span at 766–776 (LLPPPSQPPGR) shows a compositional bias: pro residues.

It belongs to the glycosyl hydrolase 65 family.

This is an uncharacterized protein from Mycobacterium leprae (strain TN).